Reading from the N-terminus, the 444-residue chain is Argininosuccinate synthase (444 aa).

Residues 18–26 and alanine 44 each bind ATP; that span reads AFSGGLDTS. Residue tyrosine 100 coordinates L-citrulline. The ATP site is built by glycine 130 and threonine 132. Positions 132, 136, and 137 each coordinate L-aspartate. Position 136 (asparagine 136) interacts with L-citrulline. Aspartate 137 contacts ATP. 2 residues coordinate L-citrulline: arginine 140 and serine 193. Aspartate 195 lines the ATP pocket. Residues threonine 202, glutamate 204, and glutamate 281 each contribute to the L-citrulline site.

Belongs to the argininosuccinate synthase family. Type 2 subfamily. Homotetramer.

Its subcellular location is the cytoplasm. The enzyme catalyses L-citrulline + L-aspartate + ATP = 2-(N(omega)-L-arginino)succinate + AMP + diphosphate + H(+). The protein operates within amino-acid biosynthesis; L-arginine biosynthesis; L-arginine from L-ornithine and carbamoyl phosphate: step 2/3. This is Argininosuccinate synthase from Haemophilus influenzae (strain PittGG).